We begin with the raw amino-acid sequence, 505 residues long: Cytochrome P450 4Z1 (505 aa).

The Cytoplasmic portion of the chain corresponds to 1-9 (MEPSWLQEL). A helical; Signal-anchor for type II membrane protein membrane pass occupies residues 10–30 (MAHPFLLLILLCMSLLLFQVI). Topologically, residues 31–505 (RLYQRRRWMI…GIHVFAKKVC (475 aa)) are lumenal. Cysteine 452 contributes to the heme binding site.

The protein belongs to the cytochrome P450 family. Heme is required as a cofactor. Preferentially detected in breast carcinoma tissue and mammary gland, whereas only marginal expression is found in all other tested tissues.

It localises to the endoplasmic reticulum membrane. Its subcellular location is the microsome membrane. The enzyme catalyses an organic molecule + reduced [NADPH--hemoprotein reductase] + O2 = an alcohol + oxidized [NADPH--hemoprotein reductase] + H2O + H(+). It carries out the reaction dodecanoate + reduced [NADPH--hemoprotein reductase] + O2 = 7-hydroxydodecanoate + oxidized [NADPH--hemoprotein reductase] + H2O + H(+). The catalysed reaction is dodecanoate + reduced [NADPH--hemoprotein reductase] + O2 = 8-hydroxydodecanoate + oxidized [NADPH--hemoprotein reductase] + H2O + H(+). It catalyses the reaction dodecanoate + reduced [NADPH--hemoprotein reductase] + O2 = 9-hydroxydodecanoate + oxidized [NADPH--hemoprotein reductase] + H2O + H(+). The enzyme catalyses dodecanoate + reduced [NADPH--hemoprotein reductase] + O2 = 10-hydroxydodecanoate + oxidized [NADPH--hemoprotein reductase] + H2O + H(+). It carries out the reaction dodecanoate + reduced [NADPH--hemoprotein reductase] + O2 = 11-hydroxydodecanoate + oxidized [NADPH--hemoprotein reductase] + H2O + H(+). The catalysed reaction is tetradecanoate + reduced [NADPH--hemoprotein reductase] + O2 = 9-hydroxytetradecanoate + oxidized [NADPH--hemoprotein reductase] + H2O + H(+). It catalyses the reaction tetradecanoate + reduced [NADPH--hemoprotein reductase] + O2 = 10-hydroxytetradecanoate + oxidized [NADPH--hemoprotein reductase] + H2O + H(+). The enzyme catalyses tetradecanoate + reduced [NADPH--hemoprotein reductase] + O2 = 11-hydroxytetradecanoate + oxidized [NADPH--hemoprotein reductase] + H2O + H(+). It carries out the reaction tetradecanoate + reduced [NADPH--hemoprotein reductase] + O2 = 12-hydroxytetradecanoate + oxidized [NADPH--hemoprotein reductase] + H2O + H(+). The catalysed reaction is (5Z,8Z,11Z,14Z)-eicosatetraenoate + reduced [NADPH--hemoprotein reductase] + O2 = (14S,15R)-epoxy-(5Z,8Z,11Z)-eicosatrienoate + oxidized [NADPH--hemoprotein reductase] + H2O + H(+). A cytochrome P450 monooxygenase that catalyzes the in-chain oxidation of fatty acids. Catalyzes the hydroxylation of carbon-hydrogen bonds. Hydroxylates lauric and myristic acids predominantly at the omega-4 and omega-2 positions, respectively. Catalyzes the epoxidation of double bonds of polyunsaturated fatty acids (PUFA). Displays an absolute stereoselectivity in the epoxidation of arachidonic acid producing the 14(S),15(R)-epoxyeicosatrienoic acid (EET) enantiomer. Mechanistically, uses molecular oxygen inserting one oxygen atom into a substrate, and reducing the second into a water molecule, with two electrons provided by NADPH via cytochrome P450 reductase (CPR; NADPH-ferrihemoprotein reductase). In Homo sapiens (Human), this protein is Cytochrome P450 4Z1.